We begin with the raw amino-acid sequence, 222 residues long: Triosephosphate isomerase (222 aa).

Residue 9-11 (NFK) coordinates substrate. His-93 serves as the catalytic Electrophile. Glu-141 functions as the Proton acceptor in the catalytic mechanism. Residues Ile-146, Gly-181, and 202–203 (AS) each bind substrate.

The protein belongs to the triosephosphate isomerase family. As to quaternary structure, homotetramer; dimer of dimers.

The protein resides in the cytoplasm. It carries out the reaction D-glyceraldehyde 3-phosphate = dihydroxyacetone phosphate. It participates in carbohydrate biosynthesis; gluconeogenesis. The protein operates within carbohydrate degradation; glycolysis; D-glyceraldehyde 3-phosphate from glycerone phosphate: step 1/1. Functionally, involved in the gluconeogenesis. Catalyzes stereospecifically the conversion of dihydroxyacetone phosphate (DHAP) to D-glyceraldehyde-3-phosphate (G3P). This is Triosephosphate isomerase from Methanothermus fervidus (strain ATCC 43054 / DSM 2088 / JCM 10308 / V24 S).